A 317-amino-acid chain; its full sequence is Peroxidase 22.3 (317 aa).

Residues 1 to 25 (MASATNSSLSLMLLVAAAMASVASA) form the signal peptide. Glutamine 26 bears the Pyrrolidone carboxylic acid mark. 2 cysteine pairs are disulfide-bonded: cysteine 36–cysteine 111 and cysteine 69–cysteine 74. Histidine 67 (proton acceptor) is an active-site residue. The Ca(2+) site is built by aspartate 68, valine 71, glycine 73, aspartate 75, and serine 77. Residue asparagine 112 is glycosylated (N-linked (GlcNAc...) asparagine). Cystine bridges form between cysteine 117–cysteine 312 and cysteine 196–cysteine 221. Proline 159 contributes to the substrate binding site. The N-linked (GlcNAc...) asparagine glycan is linked to asparagine 171. Histidine 189 provides a ligand contact to heme b. Threonine 190 contacts Ca(2+). Asparagine 205 is a glycosylation site (N-linked (GlcNAc...) asparagine). Ca(2+)-binding residues include aspartate 236, threonine 239, and aspartate 244.

It belongs to the peroxidase family. Classical plant (class III) peroxidase subfamily. Heme b is required as a cofactor. Requires Ca(2+) as cofactor.

It localises to the secreted. It catalyses the reaction H2O2 + AH2 = A + 2 H2O. Functionally, removal of H(2)O(2), oxidation of toxic reductants, biosynthesis and degradation of lignin, suberization, auxin catabolism, response to environmental stresses such as wounding, pathogen attack and oxidative stress. These functions might be dependent on each isozyme/isoform in each plant tissue. The chain is Peroxidase 22.3 from Oryza sativa subsp. japonica (Rice).